Here is a 101-residue protein sequence, read N- to C-terminus: Small ribosomal subunit protein uS10 (101 aa).

Belongs to the universal ribosomal protein uS10 family. Part of the 30S ribosomal subunit.

Its function is as follows. Involved in the binding of tRNA to the ribosomes. The protein is Small ribosomal subunit protein uS10 of Methanocaldococcus jannaschii (strain ATCC 43067 / DSM 2661 / JAL-1 / JCM 10045 / NBRC 100440) (Methanococcus jannaschii).